The primary structure comprises 441 residues: Dolichyl-diphosphooligosaccharide--protein glycosyltransferase 48 kDa subunit (441 aa).

An N-terminal signal peptide occupies residues 1-28; the sequence is MKMVPRLAVRAWPLCGLLLAALGCVCAS. The Lumenal segment spans residues 29-412; that stretch reads GPRTLVLLDN…YERFIPSAYP (384 aa). Residues 413-432 form a helical membrane-spanning segment; it reads YYASAFSMMAGLFLFSVVFL. Topologically, residues 433-441 are cytoplasmic; sequence HMKEKEKSD.

It belongs to the DDOST 48 kDa subunit family. As to quaternary structure, component of the oligosaccharyltransferase (OST) complex. OST exists in two different complex forms which contain common core subunits RPN1, RPN2, OST48, OST4, DAD1 and TMEM258, either STT3A or STT3B as catalytic subunits, and form-specific accessory subunits. STT3A complex assembly occurs through the formation of 3 subcomplexes. Subcomplex 1 contains RPN1 and TMEM258, subcomplex 2 contains the STT3A-specific subunits STT3A, DC2/OSTC, and KCP2 as well as the core subunit OST4, and subcomplex 3 contains RPN2, DAD1, and OST48. The STT3A complex can form stable complexes with the Sec61 complex or with both the Sec61 and TRAP complexes. Interacts with SMIM22.

The protein localises to the endoplasmic reticulum membrane. Its pathway is protein modification; protein glycosylation. In terms of biological role, subunit of the oligosaccharyl transferase (OST) complex that catalyzes the initial transfer of a defined glycan (Glc(3)Man(9)GlcNAc(2) in eukaryotes) from the lipid carrier dolichol-pyrophosphate to an asparagine residue within an Asn-X-Ser/Thr consensus motif in nascent polypeptide chains, the first step in protein N-glycosylation. N-glycosylation occurs cotranslationally and the complex associates with the Sec61 complex at the channel-forming translocon complex that mediates protein translocation across the endoplasmic reticulum (ER). All subunits are required for a maximal enzyme activity. Required for the assembly of both SST3A- and SS3B-containing OST complexes. The protein is Dolichyl-diphosphooligosaccharide--protein glycosyltransferase 48 kDa subunit of Rattus norvegicus (Rat).